Here is a 1070-residue protein sequence, read N- to C-terminus: DNA-directed RNA polymerase subunit beta (1070 aa).

This sequence belongs to the RNA polymerase beta chain family. In terms of assembly, in plastids the minimal PEP RNA polymerase catalytic core is composed of four subunits: alpha, beta, beta', and beta''. When a (nuclear-encoded) sigma factor is associated with the core the holoenzyme is formed, which can initiate transcription.

It is found in the plastid. It localises to the chloroplast. It carries out the reaction RNA(n) + a ribonucleoside 5'-triphosphate = RNA(n+1) + diphosphate. DNA-dependent RNA polymerase catalyzes the transcription of DNA into RNA using the four ribonucleoside triphosphates as substrates. This is DNA-directed RNA polymerase subunit beta from Platanus occidentalis (Sycamore).